The following is a 207-amino-acid chain: Phosphoenolpyruvate guanylyltransferase (207 aa).

Phosphoenolpyruvate contacts are provided by Thr137, Gly153, and Ser156.

This sequence belongs to the CofC family.

The catalysed reaction is phosphoenolpyruvate + GTP + H(+) = enolpyruvoyl-2-diphospho-5'-guanosine + diphosphate. It functions in the pathway cofactor biosynthesis; coenzyme F420 biosynthesis. In terms of biological role, guanylyltransferase that catalyzes the activation of phosphoenolpyruvate (PEP) as enolpyruvoyl-2-diphospho-5'-guanosine, via the condensation of PEP with GTP. It is involved in the biosynthesis of coenzyme F420, a hydride carrier cofactor. In Sphaerobacter thermophilus (strain ATCC 49802 / DSM 20745 / KCCM 41009 / NCIMB 13125 / S 6022), this protein is Phosphoenolpyruvate guanylyltransferase.